Here is a 769-residue protein sequence, read N- to C-terminus: MLDSFKEDPNLRKLLFSGHFGLEKENIRVTSDGKLALTPHPAIFGPKEDNPYIKTDFSESQIEMITPVTDSIDSVYEWLENLHNIVSLRSENELLWPSSNPPILPAEEDIPIAEYKTPDSPDRKYREHLAKGYGKKIQLLSGIHYNFSFPEALIDGLYANISLPEESKQDFKNRLYLKVAKYFMKNRWLLIYLTGASPVYLADFSKTKHEESLPDGSSALRDGISLRNSNAGYKNKEALFVDYNSFDAYISSISNYIEAGKIESMREFYNPIRLKNAHTDQTVESLAEHGVEYLEIRSIDLNPLEPNGISKDELDFIHLFLIKGLLSEDRELCANNQQLADENENNIALNGLAQPSIKNCDNEDIPLADAGLLELDKMSDFIKSLRPEDTKLRAIIEKQKERLLHPEKTIAAQVKQQVTKEGYVDFHLNQAKTYMEETEALAYKLIGAEDMELSTQIIWKDAIARGIKVDVLDRAENFLRFQKGDHIEYVKQASKTSKDNYVSVLMMENKVVTKLVLAEHDIRVPFGDSFSDQALALEAFSLFEDKQIVVKPKSTNYGWGISIFKNKFTLEDYQEALNIAFSYDSSVIIEEFIPGDEFRFLVINDKVEAVLKRVPANVTGDGIHTVRELVEEKNTDPLRGTDHLKPLEKIRTGPEETLMLSMQNLSWDSIPKAEEIIYLRENSNVSTGGDSIDYTEEMDDYFKEIAIRATQVLDAKICGVDIIVPRETIDRDKHAIIELNFNPAMHMHCFPYQGEQKKIGDKILDFLFD.

The segment at 1–347 (MLDSFKEDPN…QLADENENNI (347 aa)) is glutamate--cysteine ligase. An ATP-grasp domain is found at 514 to 768 (KLVLAEHDIR…IGDKILDFLF (255 aa)). 541-599 (SLFEDKQIVVKPKSTNYGWGISIFKNKFTLEDYQEALNIAFSYDSSVIIEEFIPGDEFR) is a binding site for ATP. Mg(2+) contacts are provided by Asp721, Glu738, and Asn740. Mn(2+)-binding residues include Asp721, Glu738, and Asn740.

This sequence in the N-terminal section; belongs to the glutamate--cysteine ligase type 1 family. Type 2 subfamily. In terms of assembly, monomer. Mg(2+) is required as a cofactor. The cofactor is Mn(2+).

It carries out the reaction L-cysteine + L-glutamate + ATP = gamma-L-glutamyl-L-cysteine + ADP + phosphate + H(+). The enzyme catalyses gamma-L-glutamyl-L-cysteine + glycine + ATP = glutathione + ADP + phosphate + H(+). It functions in the pathway sulfur metabolism; glutathione biosynthesis; glutathione from L-cysteine and L-glutamate: step 1/2. It participates in sulfur metabolism; glutathione biosynthesis; glutathione from L-cysteine and L-glutamate: step 2/2. Synthesizes glutathione from L-glutamate and L-cysteine via gamma-L-glutamyl-L-cysteine. The polypeptide is Glutathione biosynthesis bifunctional protein GshAB (Listeria monocytogenes serovar 1/2a (strain ATCC BAA-679 / EGD-e)).